The chain runs to 245 residues: DNA terminal protein (245 aa).

The Nuclear localization signal signature appears at 4–55 (KRLKKKLETKRKKSLLVSEGYSKKETKKLKGRELETVYKKKAHNRKNRERAR). Tyrosine 194 is modified (O-(5'-phospho-DNA)-tyrosine).

As to quaternary structure, interacts with the DNA-binding protein P1.

Its subcellular location is the virion. Functionally, acts as a primer for viral genomic replication. DNA terminal protein is covalently linked to the 5'-ends of both strands of the genome through a phosphodiester bond between the beta-hydroxyl group of a tyrosine residue and the 5'-phosphate of the terminal deoxythymidylate. This protein is essential for DNA replication and is involved in the priming of DNA elongation. In Bacillus thuringiensis (Bacillus thuringiensis bacteriophage Bam35c), this protein is DNA terminal protein.